A 349-amino-acid chain; its full sequence is sn-glycerol-3-phosphate import ATP-binding protein UgpC (349 aa).

Residues 4-235 (VTLTAVRKVY…PASTFVASFM (232 aa)) form the ABC transporter domain. 37 to 44 (GPSGCGKS) lines the ATP pocket.

The protein belongs to the ABC transporter superfamily. sn-glycerol-3-phosphate importer (TC 3.A.1.1.3) family. The complex is composed of two ATP-binding proteins (UgpC), two transmembrane proteins (UgpA and UgpE) and a solute-binding protein (UgpB).

Its subcellular location is the cell inner membrane. It carries out the reaction sn-glycerol 3-phosphate(out) + ATP + H2O = sn-glycerol 3-phosphate(in) + ADP + phosphate + H(+). Its function is as follows. Part of the ABC transporter complex UgpBAEC involved in sn-glycerol-3-phosphate (G3P) import. Responsible for energy coupling to the transport system. This is sn-glycerol-3-phosphate import ATP-binding protein UgpC from Jannaschia sp. (strain CCS1).